The following is a 136-amino-acid chain: Histone H3.Y (136 aa).

Residues 1-16 (MARTKQTARKATAWQA) show a composition bias toward low complexity. Residues 1–43 (MARTKQTARKATAWQAPRKPLATKAAGKRAPPTGGIKKPHRYK) form a disordered region. Position 3 is an asymmetric dimethylarginine (arginine 3). Arginine 3 carries the post-translational modification Citrulline; alternate. Threonine 4 bears the Phosphothreonine mark. Lysine 5 is modified (allysine; alternate). An N6,N6,N6-trimethyllysine; alternate modification is found at lysine 5. Lysine 5 bears the N6,N6-dimethyllysine; alternate mark. Lysine 5 is modified (N6-(2-hydroxyisobutyryl)lysine; alternate). Lysine 5 carries the post-translational modification N6-(beta-hydroxybutyryl)lysine; alternate. Lysine 5 carries the post-translational modification N6-acetyllysine; alternate. Lysine 5 is subject to N6-crotonyllysine; alternate. Lysine 5 carries the post-translational modification N6-methyllysine; alternate. Glutamine 6 carries the 5-glutamyl dopamine; alternate modification. Glutamine 6 bears the 5-glutamyl serotonin; alternate mark. Threonine 7 carries the phosphothreonine modification. Arginine 9 carries the post-translational modification Citrulline; alternate. Arginine 9 bears the Symmetric dimethylarginine mark. Lysine 10 is subject to N6,N6,N6-trimethyllysine; alternate. N6,N6-dimethyllysine; alternate is present on lysine 10. Lysine 10 carries the N6-(2-hydroxyisobutyryl)lysine; alternate modification. Lysine 10 bears the N6-(beta-hydroxybutyryl)lysine; alternate mark. Lysine 10 is modified (N6-acetyllysine; alternate). At lysine 10 the chain carries N6-crotonyllysine; alternate. Lysine 10 bears the N6-methyllysine; alternate mark. Lysine 10 carries the post-translational modification N6-butyryllysine; alternate. An N6-lactoyllysine; alternate modification is found at lysine 10. Residue threonine 12 is modified to Phosphothreonine. Arginine 18 carries the asymmetric dimethylarginine modification. Arginine 18 is modified (citrulline; alternate). N6-(2-hydroxyisobutyryl)lysine; alternate occurs at positions 19, 24, 28, and 37. N6-(beta-hydroxybutyryl)lysine; alternate occurs at positions 19, 24, and 28. Lysine 19, lysine 24, lysine 28, and lysine 37 each carry N6-acetyllysine; alternate. N6-crotonyllysine; alternate is present on residues lysine 19, lysine 24, and lysine 28. Residues lysine 19, lysine 24, lysine 28, and lysine 37 each carry the N6-methyllysine; alternate modification. Lysine 19 and lysine 24 each carry N6-butyryllysine; alternate. N6-lactoyllysine; alternate occurs at positions 19, 24, and 28. An N6-glutaryllysine; alternate mark is found at lysine 19, lysine 24, and lysine 28. N6,N6,N6-trimethyllysine; alternate is present on residues lysine 28 and lysine 37. N6,N6-dimethyllysine; alternate occurs at positions 28 and 37. Lysine 38 carries the N6-methyllysine modification. At tyrosine 42 the chain carries Phosphotyrosine. Lysine 57 carries the post-translational modification N6,N6,N6-trimethyllysine; alternate. Lysine 57 is modified (N6-(2-hydroxyisobutyryl)lysine; alternate). At lysine 57 the chain carries N6-(beta-hydroxybutyryl)lysine; alternate. An N6-acetyllysine; alternate modification is found at lysine 57. The residue at position 57 (lysine 57) is an N6-crotonyllysine; alternate. Position 57 is an N6-lactoyllysine; alternate (lysine 57). Lysine 57 is subject to N6-glutaryllysine; alternate. At lysine 57 the chain carries N6-methyllysine. The residue at position 57 (lysine 57) is an N6-succinyllysine; alternate. At serine 58 the chain carries Phosphoserine. Lysine 65 carries the N6-(2-hydroxyisobutyryl)lysine; alternate modification. Lysine 65 bears the N6-methyllysine; alternate mark. Residue serine 87 is modified to Phosphoserine. Threonine 108 carries the phosphothreonine modification.

This sequence belongs to the histone H3 family. The nucleosome is a histone octamer containing two molecules each of H2A, H2B, H3 and H4 assembled in one H3-H4 heterotetramer and two H2A-H2B heterodimers. The octamer wraps approximately 147 bp of DNA. Interacts with HIRA, a chaperone required for its incorporation into nucleosomes. Does not interact with DAXX chaperone. Acetylation is generally linked to gene activation. Acetylation on Lys-10 (H3K9ac) impairs methylation at Arg-9 (H3R8me2s). Acetylation on Lys-19 (H3K18ac) and Lys-24 (H3K24ac) favors methylation at Arg-18 (H3R17me). In terms of processing, citrullination at Arg-9 (H3R8ci) and/or Arg-18 (H3R17ci) impairs methylation and represses transcription. Post-translationally, asymmetric dimethylation at Arg-18 (H3R17me2a) is linked to gene activation. Symmetric dimethylation at Arg-9 (H3R8me2s) is linked to gene repression. Asymmetric dimethylation at Arg-3 (H3R2me2a) is linked to gene repression and is mutually exclusive with H3 Lys-5 methylation (H3K4me2 and H3K4me3). H3R2me2a is present at the 3' of genes regardless of their transcription state and is enriched on inactive promoters, while it is absent on active promoters. Methylation at Lys-5 (H3K4me) facilitates subsequent acetylation of H3 and H4. Methylation at Lys-10 (H3K9me) and Lys-28 (H3K27me), which are linked to gene repression, are underrepresented. Methylation at Lys-10 (H3K9me) is a specific target for HP1 proteins (CBX1, CBX3 and CBX5) and prevents subsequent acetylation of H3 and H4. In terms of processing, phosphorylation at Thr-7 (H3T6ph) is a specific tag for epigenetic transcriptional activation that prevents demethylation of Lys-5 (H3K4me) by LSD1/KDM1A. At centromeres, specifically phosphorylated at Thr-12 (H3T11ph) from prophase to early anaphase. Phosphorylation at Thr-12 (H3T11ph) is a specific tag for epigenetic transcriptional activation that promotes demethylation of Lys-10 (H3K9me). Phosphorylation at Tyr-42 (H3Y41ph) promotes exclusion of CBX5 (HP1 alpha) from chromatin. Post-translationally, lysine deamination at Lys-5 (H3K4all) to form allysine. Allysine formation only takes place on H3K4me3 and results in gene repression. Crotonylation (Kcr) is specifically present in male germ cells and marks testis-specific genes in post-meiotic cells, including X-linked genes that escape sex chromosome inactivation in haploid cells. Crotonylation marks active promoters and enhancers and confers resistance to transcriptional repressors. It is also associated with post-meiotically activated genes on autosomes. In terms of processing, butyrylation of histones marks active promoters and competes with histone acetylation. It is present during late spermatogenesis. Expressed at low level in some tissues, such as testis and brain.

Its subcellular location is the nucleus. The protein localises to the chromosome. In terms of biological role, primate-specific variant histone H3, which constitutes a core component of nucleosomes. Histone H3.Y-containing nucleosomes accumulate around transcription start sites and have flexible DNA ends, suggesting that they form relaxed chromatin that allows transcription factor access. Histone H1 binds less efficiently to histone H3.Y-containing nucleosomes. Nucleosomes wrap and compact DNA into chromatin, limiting DNA accessibility to the cellular machineries which require DNA as a template. Histones thereby play a central role in transcription regulation, DNA repair, DNA replication and chromosomal stability. DNA accessibility is regulated via a complex set of post-translational modifications of histones, also called histone code, and nucleosome remodeling. This Homo sapiens (Human) protein is Histone H3.Y.